Consider the following 677-residue polypeptide: DNA-directed RNA polymerase subunit beta' (677 aa).

Residues C69, C71, C87, and C90 each contribute to the Zn(2+) site. Mg(2+) is bound by residues D489, D491, and D493.

This sequence belongs to the RNA polymerase beta' chain family. RpoC1 subfamily. In terms of assembly, in plastids the minimal PEP RNA polymerase catalytic core is composed of four subunits: alpha, beta, beta', and beta''. When a (nuclear-encoded) sigma factor is associated with the core the holoenzyme is formed, which can initiate transcription. Requires Mg(2+) as cofactor. The cofactor is Zn(2+).

It is found in the plastid. The protein resides in the chloroplast. The catalysed reaction is RNA(n) + a ribonucleoside 5'-triphosphate = RNA(n+1) + diphosphate. DNA-dependent RNA polymerase catalyzes the transcription of DNA into RNA using the four ribonucleoside triphosphates as substrates. The chain is DNA-directed RNA polymerase subunit beta' from Daucus carota (Wild carrot).